The sequence spans 815 residues: Subtilisin-like protease SBT2.5 (815 aa).

A signal peptide spans 1 to 19; that stretch reads MDIGLRIFVVFVLLVAVTA. In terms of domain architecture, Inhibitor I9 spans 21–124; sequence VYIVTMEGDP…RSVDKDWKVR (104 aa). Positions 120–671 constitute a Peptidase S8 domain; sequence DWKVRRLTTH…SGHVNPSAAL (552 aa). Residues Asp-160 and His-234 each act as charge relay system in the active site. The PA domain maps to 397-501; the sequence is TLVSANDVLL…VSKSMDLIDY (105 aa). N-linked (GlcNAc...) asparagine glycans are attached at residues Asn-503 and Asn-577. Ser-596 functions as the Charge relay system in the catalytic mechanism. N-linked (GlcNAc...) asparagine glycosylation is present at Asn-701.

It belongs to the peptidase S8 family. As to expression, expressed in roots, leaves and flowers of mature plants.

This Arabidopsis thaliana (Mouse-ear cress) protein is Subtilisin-like protease SBT2.5.